The chain runs to 349 residues: Histidinol-phosphate aminotransferase (349 aa).

K206 bears the N6-(pyridoxal phosphate)lysine mark.

The protein belongs to the class-II pyridoxal-phosphate-dependent aminotransferase family. Histidinol-phosphate aminotransferase subfamily. In terms of assembly, homodimer. Pyridoxal 5'-phosphate is required as a cofactor.

The enzyme catalyses L-histidinol phosphate + 2-oxoglutarate = 3-(imidazol-4-yl)-2-oxopropyl phosphate + L-glutamate. It participates in amino-acid biosynthesis; L-histidine biosynthesis; L-histidine from 5-phospho-alpha-D-ribose 1-diphosphate: step 7/9. The polypeptide is Histidinol-phosphate aminotransferase (Hydrogenobaculum sp. (strain Y04AAS1)).